Consider the following 309-residue polypeptide: Taste receptor type 2 member 124 (309 aa).

The Extracellular portion of the chain corresponds to 1–7 (MVSVLHS). Residues 8–28 (ISTIIIIAEFVWGNLSNGLIV) form a helical membrane-spanning segment. At 29 to 46 (LKNCLDWINIKELSTLDQ) the chain is on the cytoplasmic side. Residues 47-67 (ILILLAISRISLIWETLLMWV) traverse the membrane as a helical segment. Topologically, residues 68 to 81 (KDKLISSITIEELK) are extracellular. Residues 82 to 102 (MIMFSFMLSSHFSLWLATALS) form a helical membrane-spanning segment. At 103–127 (TFYLFRIANCSWQIFLYLKWRLKHL) the chain is on the cytoplasmic side. A helical membrane pass occupies residues 128–148 (IVQMLLGSVMFLIANIIQITI). Residues 149-182 (TLEKRFYQYKGNTSVNSIQNEFALLIEMMLFNMT) are Extracellular-facing. 2 N-linked (GlcNAc...) asparagine glycosylation sites follow: Asn160 and Asn180. The chain crosses the membrane as a helical span at residues 183–203 (IFSVIPFLLALISFFLLIFSL). Residues 204–227 (WKHLQRMQLNSREDRDPSTKAHRN) lie on the Cytoplasmic side of the membrane. The helical transmembrane segment at 228–248 (ALGIMVSFLLLYTMYVLSLLI) threads the bilayer. Residues 249–261 (SWIAQKNQSELVH) are Extracellular-facing. The N-linked (GlcNAc...) asparagine glycan is linked to Asn255. The chain crosses the membrane as a helical span at residues 262-282 (IICMITSLLNPSVHSSILILG). Residues 283–309 (NFKLKQSSLCILRHLGCRLKSQNTPTT) are Cytoplasmic-facing.

It belongs to the G-protein coupled receptor T2R family.

Its subcellular location is the membrane. Putative taste receptor which may play a role in the perception of bitterness. The chain is Taste receptor type 2 member 124 from Rattus norvegicus (Rat).